The following is a 129-amino-acid chain: Large ribosomal subunit protein bL12 (129 aa).

This sequence belongs to the bacterial ribosomal protein bL12 family. As to quaternary structure, homodimer. Part of the ribosomal stalk of the 50S ribosomal subunit. Forms a multimeric L10(L12)X complex, where L10 forms an elongated spine to which 2 to 4 L12 dimers bind in a sequential fashion. Binds GTP-bound translation factors.

In terms of biological role, forms part of the ribosomal stalk which helps the ribosome interact with GTP-bound translation factors. Is thus essential for accurate translation. In Pseudothermotoga lettingae (strain ATCC BAA-301 / DSM 14385 / NBRC 107922 / TMO) (Thermotoga lettingae), this protein is Large ribosomal subunit protein bL12.